The following is a 195-amino-acid chain: uncharacterized protein (195 aa).

The disordered stretch occupies residues 1–35 (MASSSSAALRPFGTARLTPGRQTGRQTQQQISAPE). Positions 20–30 (GRQTGRQTQQQ) are enriched in low complexity. The MSP domain occupies 76 to 184 (GVTVIPRVAR…PASINMALEA (109 aa)).

This is an uncharacterized protein from Caenorhabditis elegans.